We begin with the raw amino-acid sequence, 130 residues long: uncharacterized protein (130 aa).

A signal peptide spans 1–19; it reads MLAPLFLCCLRNLFRKLIS.

It is found in the secreted. This is an uncharacterized protein from Homo sapiens (Human).